A 207-amino-acid polypeptide reads, in one-letter code: Ribosomal RNA small subunit methyltransferase G (207 aa).

S-adenosyl-L-methionine-binding positions include Gly-73, Leu-78, Val-124–Glu-125, and Arg-139.

This sequence belongs to the methyltransferase superfamily. RNA methyltransferase RsmG family.

It is found in the cytoplasm. The catalysed reaction is guanosine(527) in 16S rRNA + S-adenosyl-L-methionine = N(7)-methylguanosine(527) in 16S rRNA + S-adenosyl-L-homocysteine. Its function is as follows. Specifically methylates the N7 position of guanine in position 527 of 16S rRNA. In Cronobacter sakazakii (strain ATCC BAA-894) (Enterobacter sakazakii), this protein is Ribosomal RNA small subunit methyltransferase G.